A 265-amino-acid chain; its full sequence is Type II pantothenate kinase (265 aa).

Asp6–Lys13 contacts ATP. Glu70 acts as the Proton acceptor in catalysis. ATP contacts are provided by residues Thr99, Gly121–Gln125, Tyr137, and Ser225.

Belongs to the type II pantothenate kinase family. In terms of assembly, homodimer.

It localises to the cytoplasm. The enzyme catalyses (R)-pantothenate + ATP = (R)-4'-phosphopantothenate + ADP + H(+). Its pathway is cofactor biosynthesis; coenzyme A biosynthesis; CoA from (R)-pantothenate: step 1/5. Its function is as follows. Catalyzes the phosphorylation of pantothenate (Pan), the first step in CoA biosynthesis. This Staphylococcus epidermidis (strain ATCC 12228 / FDA PCI 1200) protein is Type II pantothenate kinase.